A 118-amino-acid polypeptide reads, in one-letter code: MNRRAAAERQGRTGERIAAWWLRLHGWRIVGSRVKTRRGEVDLIARRGRTLAFVEVKTRGDAAGLATAIDEYRLRRVAAAAEALLPRYGVGVENVRIDVMLVRPWRRPVHLTNVWHGQ.

It belongs to the UPF0102 family.

This is UPF0102 protein Swit_0572 from Rhizorhabdus wittichii (strain DSM 6014 / CCUG 31198 / JCM 15750 / NBRC 105917 / EY 4224 / RW1) (Sphingomonas wittichii).